The primary structure comprises 247 residues: Eukaryotic translation initiation factor 3 subunit J (247 aa).

Disordered stretches follow at residues 1-64 and 77-101; these read MADW…KTLK and EEKR…EEQM. Over residues 24–45 the composition is skewed to acidic residues; sequence EGEDEDDDIKESWDDDDEDEKK. Positions 43-108 form a coiled coil; sequence EKKEDEAKNT…EQMAEKLRRQ (66 aa).

It belongs to the eIF-3 subunit J family. As to quaternary structure, component of the eukaryotic translation initiation factor 3 (eIF-3) complex.

It is found in the cytoplasm. In terms of biological role, component of the eukaryotic translation initiation factor 3 (eIF-3) complex, which is involved in protein synthesis of a specialized repertoire of mRNAs and, together with other initiation factors, stimulates binding of mRNA and methionyl-tRNAi to the 40S ribosome. The eIF-3 complex specifically targets and initiates translation of a subset of mRNAs involved in cell proliferation. This chain is Eukaryotic translation initiation factor 3 subunit J, found in Nematostella vectensis (Starlet sea anemone).